Consider the following 456-residue polypeptide: uncharacterized protein (456 aa).

The TRAM domain occupies 3-61 (TIKKNEVKTGKVIDLTHEGHGVVKVDRYPIFIPNALIDEEIKFKLIKVKKNFAIGKLIE). 4 residues coordinate [4Fe-4S] cluster: Cys74, Cys80, Cys83, and Cys162. S-adenosyl-L-methionine is bound by residues Gln286, Tyr315, Glu336, and Asp384. Cys411 functions as the Nucleophile in the catalytic mechanism.

It belongs to the class I-like SAM-binding methyltransferase superfamily. RNA M5U methyltransferase family.

This is an uncharacterized protein from Staphylococcus epidermidis (strain ATCC 12228 / FDA PCI 1200).